The chain runs to 83 residues: Late seed maturation protein P8B6 (83 aa).

Basic and acidic residues-rich tracts occupy residues 1–18 (MASQ…KKGE) and 37–51 (AEGR…KEQL). The segment at 1-83 (MASQQEKKQL…DAEDEPSTRT (83 aa)) is disordered. The span at 73–83 (EDAEDEPSTRT) shows a compositional bias: acidic residues.

It belongs to the small hydrophilic plant seed protein family.

The protein resides in the cytoplasm. This protein may play a role in equipping the seed for survival, maintaining a minimal level of hydration in the dry organism and preventing the denaturation of cytoplasmic components, or may play a role during imbibition by controlling water uptake. The chain is Late seed maturation protein P8B6 from Raphanus sativus (Radish).